The sequence spans 213 residues: Octanoyltransferase (213 aa).

The region spanning 35 to 213 is the BPL/LPL catalytic domain; sequence DKHGDAVLLL…ERHLPTLVGA (179 aa). Substrate-binding positions include 73–80, 145–147, and 158–160; these read RGGKITWH, AIG, and GFS. Cysteine 176 acts as the Acyl-thioester intermediate in catalysis.

This sequence belongs to the LipB family.

The protein resides in the cytoplasm. The enzyme catalyses octanoyl-[ACP] + L-lysyl-[protein] = N(6)-octanoyl-L-lysyl-[protein] + holo-[ACP] + H(+). The protein operates within protein modification; protein lipoylation via endogenous pathway; protein N(6)-(lipoyl)lysine from octanoyl-[acyl-carrier-protein]: step 1/2. Its function is as follows. Catalyzes the transfer of endogenously produced octanoic acid from octanoyl-acyl-carrier-protein onto the lipoyl domains of lipoate-dependent enzymes. Lipoyl-ACP can also act as a substrate although octanoyl-ACP is likely to be the physiological substrate. The chain is Octanoyltransferase from Salinispora arenicola (strain CNS-205).